Here is a 153-residue protein sequence, read N- to C-terminus: Movement protein (153 aa).

Disordered stretches follow at residues 1 to 24 (MAQE…EQDP) and 121 to 153 (PWVA…RNQR). Polar residues predominate over residues 121–138 (PWVATLIPSQSAGPPQRS).

Belongs to the luteoviruses movement protein family.

In terms of biological role, transports viral genome to neighboring plant cells directly through plasmosdesmata, without any budding. The movement protein allows efficient cell to cell propagation, by bypassing the host cell wall barrier. The chain is Movement protein from Avena byzantina (Oat).